Here is a 275-residue protein sequence, read N- to C-terminus: uncharacterized protein (275 aa).

A coiled-coil region spans residues 75–157 (AKELIKNRRL…AELKQAAEQG (83 aa)).

This is an uncharacterized protein from Bacillus subtilis (strain 168).